Reading from the N-terminus, the 521-residue chain is MIAALFTTNLQLGAVGVFIFALLAFAFNKLTTWEYSIPKEVQWVDRRTQPFSYLRAKARALARSKENTLEAYFRFNKLGKAAALAVPFGRPLLLLPQTFVRWIVDQPESIISLDPIHDDFHVFVGGDLTGDHTVQELLRRELTLNLDKLISVINDEIVCALDDVLGNSPEWKSTSLADDLKTIVARTSNRVFVGKDLCRNKHYISTVKGLALVIMPETVLQDLIPQFLKGPLSRITKAFNNIYGMKKFSSLLLGVVRQRYIDVKDVLEGSGDKTRLPDDLLTWMVQKSIRKGESSANIDKLLVARIAMANLAAIETTTAAMTRSVLDLVTQGSEGGFLKAVQEETLAVVEGCNYEPSKKDVLKLVLTENAIKEALRLQVAFPGLMRQVVAPNGVTLENGLHVPCGTRLGVSAAGIHVDESIYEDPTTYNPGRFLVRDLDPRGDPSPMWKGNENYLAFSLGRRSCPGRWYVTDQLKLTLAHIFSKYEIRFEKAAETASALRKILPGAPQDRVMIRRRSVGKR.

The first 26 residues, 1–26 (MIAALFTTNLQLGAVGVFIFALLAFA), serve as a signal peptide directing secretion. Cysteine 464 is a binding site for heme.

Belongs to the cytochrome P450 family. Heme is required as a cofactor.

The protein operates within mycotoxin biosynthesis. Functionally, cytochrome P450 monooxygenase; part of the gene cluster that mediates the biosynthesis of pneumocandins, lipohexapeptides of the echinocandin family that prevent fungal cell wall formation by non-competitive inhibition of beta-1,3-glucan synthase. The 10,12-dimethylmyristoyl side chain is synthesized by the reducing polyketide synthase gloL/GLPKS4. The thioesterase gloN/GLHYD exclusively interacts with gloL/GLPKS4 to maintain turnover of the polyketide side chain. The 10R,12S-dimethylmyristic acid is then transferred to the first thiolation domain of the nonribosomal peptide synthetase gloA/GLNRPS4 by the acyl-AMP ligase gloD/GLligase, followed by its acylation to L-ornithine to trigger elongation of the cyclic hexapeptide. L-ornithine, 4R-hydroxyl-L-proline (generated from L-proline by the dioxygenase gloF/GLOXY2), 3S-hydroxyl-L-homotyrosine (generated by gloG/GLHtyB, gloH/GLHtyA, gloI/GLHtyC, gloJ/GLHtyD and hydroxylated at C-3 by the dioxygenase gloM/GLOXY1), 3R-hydroxyl-L-glutamine (generated from L-glutamine probably by the dioxygenase gloE/GLOXY3) and 3S-hydroxyl-L-proline (generated from L-proline by the dioxygenase gloF/GLOXY2 to yield pneumocandin B0), or 3S-hydroxyl-4S-methyl-L-proline (generated from L-leucine by the dioxygenase gloC/GLOXY4 to yield pneumocandin A0) are sequentially added to the growing chain. The last C domain of gloA/GLNRPS4 is proposed to be responsible for cyclization by condensation to form the peptide bond between L-ornithine and 3S-hydroxyl-4S-methyl-L-proline (for pneumocandin A0) or 3S-hydroxyl-L-proline (for pneumocandin B0). Finally, the subsequent C-4 hydroxylation of 3S-hydroxyl-L-homotyrosine and L-ornithine dihydroxylation at C-4 and C-5 are performed by the cytochrome P450 monooxygenases gloP/GLP450-1 and gloO/GLP450-2, respectively. The sequence is that of Cytochrome P450 monooxygenase gloO from Glarea lozoyensis (strain ATCC 20868 / MF5171).